Consider the following 398-residue polypeptide: Cathepsin D (398 aa).

The first 20 residues, 1–20 (MAPRGLLVLLLLALVGPCAA), serve as a signal peptide directing secretion. The propeptide at 21-63 (LIRIPLTKFTSTRRMLTEVGSEIPDMNAITQFLKFKLGFADLA) is activation peptide. A Peptidase A1 domain is found at 78-395 (YYGEIGIGTP…DRDNDSVGFA (318 aa)). Aspartate 96 is an active-site residue. A disulfide bridge connects residues cysteine 109 and cysteine 116. 2 N-linked (GlcNAc...) asparagine glycosylation sites follow: asparagine 133 and asparagine 251. Residues cysteine 274 and cysteine 278 are joined by a disulfide bond. The active site involves aspartate 283. A disulfide bridge links cysteine 317 with cysteine 354.

Belongs to the peptidase A1 family. Consists of a light chain and a heavy chain. In terms of tissue distribution, oocytic yolk, preovulatory follicles, liver.

The protein localises to the lysosome. It catalyses the reaction Specificity similar to, but narrower than, that of pepsin A. Does not cleave the 4-Gln-|-His-5 bond in B chain of insulin.. In terms of biological role, acid protease active in intracellular protein breakdown. In chicken it is a key enzyme for yolk formation as it is capable of catalyzing intra oocytic break down of protein components of both vitellogenin and VLDL. The chain is Cathepsin D (CTSD) from Gallus gallus (Chicken).